We begin with the raw amino-acid sequence, 448 residues long: Probable glycine dehydrogenase (decarboxylating) subunit 1 (448 aa).

The protein belongs to the GcvP family. N-terminal subunit subfamily. In terms of assembly, the glycine cleavage system is composed of four proteins: P, T, L and H. In this organism, the P 'protein' is a heterodimer of two subunits.

The catalysed reaction is N(6)-[(R)-lipoyl]-L-lysyl-[glycine-cleavage complex H protein] + glycine + H(+) = N(6)-[(R)-S(8)-aminomethyldihydrolipoyl]-L-lysyl-[glycine-cleavage complex H protein] + CO2. Functionally, the glycine cleavage system catalyzes the degradation of glycine. The P protein binds the alpha-amino group of glycine through its pyridoxal phosphate cofactor; CO(2) is released and the remaining methylamine moiety is then transferred to the lipoamide cofactor of the H protein. This Listeria monocytogenes serotype 4b (strain F2365) protein is Probable glycine dehydrogenase (decarboxylating) subunit 1.